A 462-amino-acid polypeptide reads, in one-letter code: MLDINQFIEDKGGNPELIRQSQKARNASVEIVDEIISDYKDWVKTRFELDELNKKFNKLQKDIGLKFKNKEDASGLLAEKEKLTQQKKELTEKEQQEDKDLKKKVFQVGNIVHPSVVVSNDEENNELVRTWKPEDLEAVGPIASVTGKPASLSHHEILLRLDGYDPDRGVKICGHRGYFFRNYGVFLNQALINYGLQFLAAKGYIPLQAPVMMNKELMSKTAQLSEFDEELYKVIDGEDEKYLIATSEQPISAYHSGEWFEKPQEQLPIHYVGYSSCFRREAGSHGKDAWGVFRVHAFEKIEQFVITEPEKSWEEFEKMISYSEEFYKSLKLPYRIVGIVSGELNNAAAKKYDLEAWFPYQKEYKELVSCSNCTDYQSRNLEIRCGIKKMGDREKKYVHCLNSTLAATQRALCCILENYQTEDGLVVPEVLRKYIPGEPEFLPFVNELPKNSTSSKDKKKKN.

K241 is covalently cross-linked (Glycyl lysine isopeptide (Lys-Gly) (interchain with G-Cter in URM1)). Residue 246–248 (TSE) coordinates L-serine. Residues 279–281 (RRE) and V295 contribute to the ATP site. Residue E302 participates in L-serine binding. Glycyl lysine isopeptide (Lys-Gly) (interchain with G-Cter in URM1) cross-links involve residues K350 and K351. 366–369 (ELVS) is a binding site for ATP. Cysteine persulfide occurs at positions 373 and 400. T404 contacts L-serine.

It belongs to the class-II aminoacyl-tRNA synthetase family. Type-1 seryl-tRNA synthetase subfamily. As to quaternary structure, homodimer; the tRNA molecule probably binds across the dimer. Interacts with ABP140; interaction is required for the tRNA N(3)-methylcytidine methyltransferase activity of ABP140. In terms of processing, conjugated to URM1, a ubiquitin-like protein, in response to oxidative stresses. The attachment of URM1 to lysine residues exclusively depends on the presence of a peroxidatic cysteine in the target protein, with low specificity for the particular residue, motif, or structural context at which urmylation can occur. The URM1-conjugation reaction is mechanistically and directly coupled to the process of cysteine persulfidation, transfering the sulfur atom of the URM1 thiocarboxyl group to redox-active cysteine residues in the target protein if it is exposed to oxidative conditions. Persulfidated on specific redox-active cysteine residues. Persulfidation (also called protein S-sulfhydration) may provide a molecular mechanism that enables cells to protect vulnerable cysteine residues from reactive oxygen species (ROS) under stress conditions.

It localises to the cytoplasm. It is found in the cytosol. It carries out the reaction tRNA(Ser) + L-serine + ATP = L-seryl-tRNA(Ser) + AMP + diphosphate + H(+). In terms of biological role, catalyzes the attachment of serine to tRNA(Ser) in a two-step reaction: serine is first activated by ATP to form Ser-AMP and then transferred to the acceptor end of tRNA(Ser). This Saccharomyces cerevisiae (strain ATCC 204508 / S288c) (Baker's yeast) protein is Serine--tRNA ligase, cytoplasmic (SES1).